A 678-amino-acid chain; its full sequence is Auxin response factor 7 (678 aa).

The segment at residues 128–230 (FCKTLTASDT…ELRVGVRRLM (103 aa)) is a DNA-binding region (TF-B3). 2 disordered regions span residues 360 to 386 (AVSN…NSIA) and 502 to 547 (GVGQ…SRQV). One can recognise a PB1 domain in the interval 548 to 641 (RSCTKVIMQG…EAKQLTPKSK (94 aa)). Residues 643–678 (PIIGDAIKPNPNKQSPESDMPHSDLDSTAPVTDKDC) are disordered.

The protein belongs to the ARF family. As to quaternary structure, homodimers and heterodimers. In terms of tissue distribution, expressed in roots, culms, leaves and young panicles.

The protein resides in the nucleus. Its function is as follows. Auxin response factors (ARFs) are transcriptional factors that bind specifically to the DNA sequence 5'-TGTCTC-3' found in the auxin-responsive promoter elements (AuxREs). This chain is Auxin response factor 7 (ARF7), found in Oryza sativa subsp. japonica (Rice).